Reading from the N-terminus, the 527-residue chain is Tetanolysin (527 aa).

The N-terminal stretch at 1 to 32 (MNKNVLKFVSRSLLIFSMTGLISNYNSSNVLA) is a signal peptide. 4 consecutive transmembrane segments (beta stranded) span residues 215-228 (QSQL…NFKA), 235-244 (IDFDSIFKGE), 313-322 (SSHVKAAFKA), and 330-342 (SSNA…LNQS). Residues 484–494 (ECTGLAWEWWR) carry the Conserved undecapeptide motif. The Cholesterol binding signature appears at 516–517 (TL).

It belongs to the cholesterol-dependent cytolysin family. In terms of assembly, homooligomeric pore complex containing 35-50 subunits; when inserted in the host membrane. Purified 48 and 53 kDa proteins with 4 different pIs (6.1, 5.6, 5.3 and 6.6) in decreasing order of activity.

The protein localises to the secreted. It localises to the host cell membrane. Its activity is regulated as follows. Cytolysis of host cells is inhibited by cholesterol. Its function is as follows. A cholesterol-dependent toxin that causes cytolysis by forming pores in cholesterol-containing host membranes. After binding to target membranes, the protein undergoes a major conformation change, leading to its insertion in the host membrane and formation of an oligomeric pore complex. Cholesterol is required for binding to host membranes, membrane insertion and pore formation; cholesterol binding is mediated by a Thr-Leu pair in the C-terminus. The sequence is that of Tetanolysin from Clostridium tetani (strain Massachusetts / E88).